A 355-amino-acid chain; its full sequence is UDP-N-acetylglucosamine--N-acetylmuramyl-(pentapeptide) pyrophosphoryl-undecaprenol N-acetylglucosamine transferase (355 aa).

Residues 15 to 17 (TGG), Asn-127, Arg-163, Ser-191, Ile-244, 263 to 268 (ALTVSE), and Gln-288 contribute to the UDP-N-acetyl-alpha-D-glucosamine site.

It belongs to the glycosyltransferase 28 family. MurG subfamily.

The protein resides in the cell inner membrane. It carries out the reaction di-trans,octa-cis-undecaprenyl diphospho-N-acetyl-alpha-D-muramoyl-L-alanyl-D-glutamyl-meso-2,6-diaminopimeloyl-D-alanyl-D-alanine + UDP-N-acetyl-alpha-D-glucosamine = di-trans,octa-cis-undecaprenyl diphospho-[N-acetyl-alpha-D-glucosaminyl-(1-&gt;4)]-N-acetyl-alpha-D-muramoyl-L-alanyl-D-glutamyl-meso-2,6-diaminopimeloyl-D-alanyl-D-alanine + UDP + H(+). It functions in the pathway cell wall biogenesis; peptidoglycan biosynthesis. Cell wall formation. Catalyzes the transfer of a GlcNAc subunit on undecaprenyl-pyrophosphoryl-MurNAc-pentapeptide (lipid intermediate I) to form undecaprenyl-pyrophosphoryl-MurNAc-(pentapeptide)GlcNAc (lipid intermediate II). This is UDP-N-acetylglucosamine--N-acetylmuramyl-(pentapeptide) pyrophosphoryl-undecaprenol N-acetylglucosamine transferase from Salmonella gallinarum (strain 287/91 / NCTC 13346).